The primary structure comprises 254 residues: MNNVSMRELLEAGAHFGHRTRFWNPKMSEYIFGSRNKIHIINLEKTLPMLSDVTNYVSRLAANKAKILFVGTKRAAQDSIREHARRCGMPYVDHRWLGGMLTNYKTVRQSIFRLKELKEMKEKGLFNDMIKKEALMLTRELEKLERSLGGIENMGGLPDALFVVDVGFEHIAVEEARRLRIPVIGVVDTNNSPDNIDYVIPGNDDSMRAVDIYVRCVADAILDGKNSNTVGRVSSDSEFVEVTSNSNEEEKSGE.

Belongs to the universal ribosomal protein uS2 family.

This Legionella pneumophila (strain Lens) protein is Small ribosomal subunit protein uS2.